Consider the following 481-residue polypeptide: Argininosuccinate lyase (481 aa).

Belongs to the lyase 1 family. Argininosuccinate lyase subfamily.

Its subcellular location is the cytoplasm. The catalysed reaction is 2-(N(omega)-L-arginino)succinate = fumarate + L-arginine. It functions in the pathway amino-acid biosynthesis; L-arginine biosynthesis; L-arginine from L-ornithine and carbamoyl phosphate: step 3/3. In Methanococcus vannielii (strain ATCC 35089 / DSM 1224 / JCM 13029 / OCM 148 / SB), this protein is Argininosuccinate lyase.